Consider the following 162-residue polypeptide: MKVLQMFFCVILLCVTSVLVEAKSTTKGDETASKRNFAQFAAMTYHTTHRWPKKYVGYGCYCGLGGYGIPVDPIDECCKTHDACYKKVEDSGICSYSWAIYLTIYKRKGGAECSEDNEKCQMEVCKCDSVAAKCLGKYKDIFNEKYAGYDKKGKCDPSFTLS.

The first 22 residues, 1 to 22 (MKVLQMFFCVILLCVTSVLVEA), serve as a signal peptide directing secretion. A propeptide spanning residues 23–35 (KSTTKGDETASKR) is cleaved from the precursor. Intrachain disulfides connect Cys60–Cys155, Cys62–Cys78, Cys77–Cys134, Cys84–Cys127, Cys94–Cys120, and Cys113–Cys125. Residues Tyr61, Gly63, and Gly65 each coordinate Ca(2+). Residue His81 is part of the active site. Ca(2+) is bound at residue Asp82. The active site involves Asp128.

This sequence belongs to the phospholipase A2 family. Group I subfamily. D49 sub-subfamily. It depends on Ca(2+) as a cofactor. Expressed both outside and in acontia, a specialised envenomation structure laden with batteries of venom-containing nematocysts found only in the superfamily Metridioidea.

The protein resides in the secreted. The protein localises to the nematocyst. The enzyme catalyses a 1,2-diacyl-sn-glycero-3-phosphocholine + H2O = a 1-acyl-sn-glycero-3-phosphocholine + a fatty acid + H(+). Functionally, PLA2 catalyzes the calcium-dependent hydrolysis of the 2-acyl groups in 3-sn-phosphoglycerides. This Calliactis polypus (Hermit crab anemone) protein is Phospholipase A2.